The chain runs to 757 residues: Probable tRNA (uracil-O(2)-)-methyltransferase (757 aa).

2 disordered regions span residues 55 to 93 and 108 to 138; these read EARG…GPEQ and QQEE…GDFP. Over residues 72–84 the composition is skewed to gly residues; the sequence is PGPGQGSPGGGPG. Ser78 is modified (phosphoserine). Basic and acidic residues predominate over residues 123–136; that stretch reads DSGHPGHAEGREGD. The residue at position 533 (Ser533) is a Phosphoserine. The C3H1-type zinc finger occupies 713 to 743; it reads ACKTRLCWFFMHHPDGCALSTDCCPFAHGPA.

The protein belongs to the TRM44 family.

It localises to the cytoplasm. It catalyses the reaction uridine(44) in tRNA(Ser) + S-adenosyl-L-methionine = 2'-O-methyluridine(44) in tRNA(Ser) + S-adenosyl-L-homocysteine + H(+). Its function is as follows. Probable adenosyl-L-methionine (AdoMet)-dependent tRNA (uracil-O(2)-)-methyltransferase. In Homo sapiens (Human), this protein is Probable tRNA (uracil-O(2)-)-methyltransferase (TRMT44).